Reading from the N-terminus, the 1006-residue chain is Zinc finger protein ZFPM1 (1006 aa).

Positions 1 to 13 are enriched in basic residues; sequence MSRRKQSNPRQIK. 2 disordered regions span residues 1–93 and 114–133; these read MSRR…DELE and SWGP…RQAE. The segment covering 15-25 has biased composition (basic and acidic residues); that stretch reads SLGDMEAREEV. Residues 42 to 62 show a composition bias toward pro residues; sequence APSPPSADVNSPPPLPPPTSP. The span at 66 to 79 shows a compositional bias: basic and acidic residues; sequence KELEGQEPEPRPTE. Residues serine 84 and serine 128 each carry the phosphoserine modification. The segment covering 121-130 has biased composition (polar residues); the sequence is SVQTRASSPR. The CCHC FOG-type 1 zinc-finger motif lies at 235–268; it reads VINKDVFPCKDCGIWYRSERNLQAHLLYYCASRQ. 4 residues coordinate Zn(2+): cysteine 243, cysteine 246, histidine 259, and cysteine 264. Serine 272 is subject to Phosphoserine. C2H2-type zinc fingers lie at residues 290-314, 320-342, and 348-371; these read RVCP…MRSH, FVCL…LKVH, and GVCH…VTNH. Positions 330-341 are interaction with TACC3; sequence TTKANCERHLKV. The residue at position 384 (serine 384) is a Phosphoserine. Disordered regions lie at residues 384–409, 438–460, and 473–515; these read SPGA…HTAL, NGEA…AAPR, and APIL…SPVP. A compositionally biased stretch (low complexity) spans 485-515; it reads APSRTPSPRSPAPARVKAELSSPTPGSSPVP. Serine 491 and serine 494 each carry phosphoserine. The CCHC FOG-type 2 zinc finger occupies 571 to 604; it reads PGAPKGATCFECEITFSNVNNYYVHKRLYCSGRR. Zn(2+) contacts are provided by cysteine 579, cysteine 582, histidine 595, and cysteine 600. Residues 605 to 681 form a disordered region; the sequence is APEDAPAARR…SVDDAEDDPS (77 aa). Positions 617 to 629 are enriched in pro residues; that stretch reads APPGPARAPPGQP. 2 positions are modified to phosphoserine: serine 638 and serine 671. A CCHC FOG-type 3 zinc finger spans residues 677 to 710; the sequence is EDDPSRTLCEACNIRFSRHETYTVHKRYYCASRH. Cysteine 685, cysteine 688, histidine 701, and cysteine 706 together coordinate Zn(2+). The interval 708–810 is disordered; that stretch reads SRHDPPPRRP…PRRPLPGAPA (103 aa). 2 stretches are compositionally biased toward pro residues: residues 715–735 and 754–769; these read RRPA…PSPA and APPP…PESP. The segment covering 780-791 has biased composition (low complexity); that stretch reads GLAPARSPGPAA. The residue at position 786 (serine 786) is a Phosphoserine. The tract at residues 794–800 is interaction with CTBP2; that stretch reads PIDLSKK. The CCHC FOG-type 4 zinc-finger motif lies at 811–844; sequence PALADYHECTACRVSFHSLEAYLAHKKYSCPAAP. Zn(2+) is bound by residues cysteine 819, cysteine 822, histidine 835, and cysteine 840. A C2H2-type 4 zinc finger spans residues 854 to 877; it reads AACPYCPPNGPVRGDLLEHFRLAH. The disordered stretch occupies residues 889–971; the sequence is GVEARTPADR…KGTPAPLPNG (83 aa). Phosphoserine occurs at positions 901, 909, 914, and 935. A compositionally biased stretch (pro residues) spans 925–950; sequence PQEPPPGPPPSPAAAPEAVPPPPAPP. The segment at 968–1001 adopts a CCHC FOG-type 5 zinc-finger fold; that stretch reads LPNGNHRYCRLCNIKFSSLSTFIAHKKYYCSSHA. Residues cysteine 976, cysteine 979, histidine 992, and cysteine 997 each contribute to the Zn(2+) site.

The protein belongs to the FOG (Friend of GATA) family. As to quaternary structure, interacts with corepressor CTBP2; this interaction is however not essential for corepressor activity. Interacts with the N-terminal zinc-finger of GATA1, GATA2 and probably GATA3. Mainly expressed in hematopoietic tissues. Also expressed in adult cerebellum, stomach, lymph node, liver and pancreas. Expressed in fetal heart, liver and spleen.

It is found in the nucleus. Functionally, transcription regulator that plays an essential role in erythroid and megakaryocytic cell differentiation. Essential cofactor that acts via the formation of a heterodimer with transcription factors of the GATA family GATA1, GATA2 and GATA3. Such heterodimer can both activate or repress transcriptional activity, depending on the cell and promoter context. The heterodimer formed with GATA proteins is essential to activate expression of genes such as NFE2, ITGA2B, alpha- and beta-globin, while it represses expression of KLF1. May be involved in regulation of some genes in gonads. May also be involved in cardiac development, in a non-redundant way with ZFPM2/FOG2. This Homo sapiens (Human) protein is Zinc finger protein ZFPM1 (ZFPM1).